Here is a 293-residue protein sequence, read N- to C-terminus: 4-hydroxy-tetrahydrodipicolinate synthase (293 aa).

Pyruvate is bound at residue Thr46. The Proton donor/acceptor role is filled by Tyr133. Lys161 acts as the Schiff-base intermediate with substrate in catalysis. A pyruvate-binding site is contributed by Val202.

This sequence belongs to the DapA family. Homotetramer; dimer of dimers.

The protein resides in the cytoplasm. It carries out the reaction L-aspartate 4-semialdehyde + pyruvate = (2S,4S)-4-hydroxy-2,3,4,5-tetrahydrodipicolinate + H2O + H(+). It participates in amino-acid biosynthesis; L-lysine biosynthesis via DAP pathway; (S)-tetrahydrodipicolinate from L-aspartate: step 3/4. Catalyzes the condensation of (S)-aspartate-beta-semialdehyde [(S)-ASA] and pyruvate to 4-hydroxy-tetrahydrodipicolinate (HTPA). The polypeptide is 4-hydroxy-tetrahydrodipicolinate synthase (Wolbachia pipientis subsp. Culex pipiens (strain wPip)).